A 258-amino-acid chain; its full sequence is Protein UL24 homolog (258 aa).

The protein belongs to the herpesviridae UL24 family.

It is found in the virion. Its subcellular location is the host cytoplasm. The protein localises to the host nucleus. The protein resides in the host nucleolus. It localises to the host Golgi apparatus. May participate in nuclear egress of viral particles. Plays a role in the dispersal of several host nucleolar proteins including NCL/nucleolin and NPM1. Since deletion of host NCL/nucleolin negatively impact on nuclear egress, UL24 supposedly acts on this process through its effect on host nucleoli. This chain is Protein UL24 homolog, found in Varicella-zoster virus (strain Dumas) (HHV-3).